Reading from the N-terminus, the 330-residue chain is Putative zinc finger protein CONSTANS-LIKE 11 (330 aa).

Cys5, Cys8, Cys28, and His33 together coordinate Zn(2+). The B box-type 1; atypical zinc-finger motif lies at 5 to 47; sequence CDFCGTEKALIYCKSDSAKLCLNCDVNVHSANPLSQRHTRSLL. The segment at 48–88 adopts a B box-type 2; degenerate zinc-finger fold; the sequence is CEKCSLQPTAVHCMNENVSLCQGCQWTASNCTGLGHRLQSL. The region spanning 276–318 is the CCT domain; sequence RDEAKKRYKQKKSKRMFGKQIRYASRKARADTRKRVKGRFVKS.

It belongs to the CONSTANS family.

It localises to the nucleus. The chain is Putative zinc finger protein CONSTANS-LIKE 11 (COL11) from Arabidopsis thaliana (Mouse-ear cress).